The primary structure comprises 335 residues: MLLIGVAGTELTAQERDWLQHDAVAGVVLFKRNFASRQQVTDLSAAIRAAAPRPQLICVDQEGGRVQRFREGYSELPPLQDIGALYATDPQQALALAEQHAWLMASEVRASGLDLSFAPVVDLGRGNRAIGNRAFSEDPQVVAAFTAAYVRGMHAVGMAATLKHFPGHGTVLEDTHVDTAIDPRALDELRAQDLVPFQAGIAAGADAVMMAHVVYPQVAPEPAGYSPRWIQDILRGELGFRGVVFSDDIGMAASHSAGGVPARVHAHLDAGCDVVLVCHPELVDEALHAVQGRSLNTAALLGLLGRGALGWDGLLADARHGDTQSHLLETLGRTV.

Substrate is bound by residues Asp60, Arg68, Arg133, and 163-164 (KH). His176 serves as the catalytic Proton donor/acceptor. Asp247 (nucleophile) is an active-site residue.

Belongs to the glycosyl hydrolase 3 family. NagZ subfamily.

Its subcellular location is the cytoplasm. It carries out the reaction Hydrolysis of terminal non-reducing N-acetyl-D-hexosamine residues in N-acetyl-beta-D-hexosaminides.. Its pathway is cell wall biogenesis; peptidoglycan recycling. Its function is as follows. Plays a role in peptidoglycan recycling by cleaving the terminal beta-1,4-linked N-acetylglucosamine (GlcNAc) from peptide-linked peptidoglycan fragments, giving rise to free GlcNAc, anhydro-N-acetylmuramic acid and anhydro-N-acetylmuramic acid-linked peptides. The protein is Beta-hexosaminidase of Stenotrophomonas maltophilia (strain R551-3).